The chain runs to 995 residues: KN motif and ankyrin repeat domain-containing protein 4 (995 aa).

Disordered stretches follow at residues 1-29 (MEKTDAKDQSSQGDEEKDPPKSHPYSVET) and 68-127 (TLPR…EVSY). Over residues 101–124 (LGTQEQNQSPPLGNAPQASTSRSE) the composition is skewed to polar residues. Residues 343-404 (SSLKQQVSAL…EGQFHQENAK (62 aa)) adopt a coiled-coil conformation. Disordered regions lie at residues 443–467 (ESWGHRGEENGLLWGPDGHKQGNQS), 503–558 (EAGT…PTDA), 617–642 (QAHPPKEPPASSSSPPVEISPSTSLK), 663–705 (LQFV…PDHK), and 721–740 (PEGTCHAAQESGPGEEVPHS). Residues 511-523 (GPQGGTRGAGGFL) are compositionally biased toward gly residues. Over residues 526–549 (SDRKTPPAGREETSSNLPGKEHPG) the composition is skewed to basic and acidic residues. A compositionally biased stretch (low complexity) spans 625–640 (PASSSSPPVEISPSTS). Acidic residues predominate over residues 680 to 693 (TSGEDSTPEDLSDS). Residues 694–705 (EAEKKCDGPDHK) show a composition bias toward basic and acidic residues. ANK repeat units follow at residues 823–853 (NGNTALHYSVSHSNFSIVKLLLETGVCNVDH), 862–890 (VMITPLASAETNEDMAVVWKLLREGNVNI), 895–924 (GGQTALMLGVSHDREDMVQALLSCQADVNL), 928–958 (DGSSALMVACHHGNVDLVRLLLAHPACDSSL), and 962–992 (AGRTALSIALKSPTHMEIAGLLRAHAEQGRS).

As to expression, strongly expressed in colon, liver, lung, skeletal muscle and kidney.

Its subcellular location is the cytoplasm. Functionally, may be involved in the control of cytoskeleton formation by regulating actin polymerization. The sequence is that of KN motif and ankyrin repeat domain-containing protein 4 (KANK4) from Homo sapiens (Human).